Here is a 447-residue protein sequence, read N- to C-terminus: Tubulin beta chain (447 aa).

Gln11, Glu69, Ser138, Gly142, Thr143, Gly144, Asn204, and Asn226 together coordinate GTP. Residue Glu69 participates in Mg(2+) binding. Residues 419-447 (VSEYQQYQDATADEEGEYEDEDQEAEDDM) are disordered. Over residues 429–447 (TADEEGEYEDEDQEAEDDM) the composition is skewed to acidic residues.

The protein belongs to the tubulin family. In terms of assembly, dimer of alpha and beta chains. A typical microtubule is a hollow water-filled tube with an outer diameter of 25 nm and an inner diameter of 15 nM. Alpha-beta heterodimers associate head-to-tail to form protofilaments running lengthwise along the microtubule wall with the beta-tubulin subunit facing the microtubule plus end conferring a structural polarity. Microtubules usually have 13 protofilaments but different protofilament numbers can be found in some organisms and specialized cells. The cofactor is Mg(2+).

Its subcellular location is the cytoplasm. The protein localises to the cytoskeleton. In terms of biological role, tubulin is the major constituent of microtubules, a cylinder consisting of laterally associated linear protofilaments composed of alpha- and beta-tubulin heterodimers. Microtubules grow by the addition of GTP-tubulin dimers to the microtubule end, where a stabilizing cap forms. Below the cap, tubulin dimers are in GDP-bound state, owing to GTPase activity of alpha-tubulin. This Hordeum vulgare (Barley) protein is Tubulin beta chain (TUBB).